The sequence spans 77 residues: Acyl carrier protein (77 aa).

Residues 2–77 (SDIADRVKKI…DAVKFISEAA (76 aa)) enclose the Carrier domain. S37 carries the O-(pantetheine 4'-phosphoryl)serine modification.

The protein belongs to the acyl carrier protein (ACP) family. In terms of processing, 4'-phosphopantetheine is transferred from CoA to a specific serine of apo-ACP by AcpS. This modification is essential for activity because fatty acids are bound in thioester linkage to the sulfhydryl of the prosthetic group.

It localises to the cytoplasm. It participates in lipid metabolism; fatty acid biosynthesis. Carrier of the growing fatty acid chain in fatty acid biosynthesis. The sequence is that of Acyl carrier protein from Cereibacter sphaeroides (strain ATCC 17029 / ATH 2.4.9) (Rhodobacter sphaeroides).